The following is a 137-amino-acid chain: 2-iminobutanoate/2-iminopropanoate deaminase (137 aa).

At serine 2 the chain carries N-acetylserine. Residues lysine 13 and lysine 67 each carry the N6-succinyllysine modification. Threonine 74 carries the post-translational modification Phosphothreonine. Serine 136 is modified (phosphoserine).

In terms of assembly, homotrimer. Interacts with YTHDF2. In terms of tissue distribution, expressed by various malignant neoplasms.

Its subcellular location is the cytoplasm. The protein resides in the nucleus. It localises to the peroxisome. The protein localises to the mitochondrion. It catalyses the reaction 2-iminobutanoate + H2O = 2-oxobutanoate + NH4(+). The catalysed reaction is 2-iminopropanoate + H2O = pyruvate + NH4(+). Catalyzes the hydrolytic deamination of enamine/imine intermediates that form during the course of normal metabolism. May facilitate the release of ammonia from these potentially toxic reactive metabolites, reducing their impact on cellular components. It may act on enamine/imine intermediates formed by several types of pyridoxal-5'-phosphate-dependent dehydratases including L-threonine dehydratase. Functionally, also promotes endoribonucleolytic cleavage of some transcripts by promoting recruitment of the ribonuclease P/MRP complex. Acts by bridging YTHDF2 and the ribonuclease P/MRP complex. RIDA/HRSP12 binds to N6-methyladenosine (m6A)-containing mRNAs containing a 5'-GGUUC-3' motif: cooperative binding of RIDA/HRSP12 and YTHDF2 to such transcripts lead to recruitment of the ribonuclease P/MRP complex and subsequent endoribonucleolytic cleavage. This chain is 2-iminobutanoate/2-iminopropanoate deaminase, found in Capra hircus (Goat).